The following is a 60-amino-acid chain: Large ribosomal subunit protein uL30 (60 aa).

The protein belongs to the universal ribosomal protein uL30 family. In terms of assembly, part of the 50S ribosomal subunit.

This chain is Large ribosomal subunit protein uL30, found in Levilactobacillus brevis (strain ATCC 367 / BCRC 12310 / CIP 105137 / JCM 1170 / LMG 11437 / NCIMB 947 / NCTC 947) (Lactobacillus brevis).